The primary structure comprises 197 residues: MLRNMVESRKTSETDIRLDLNLRGSGVYAFDTEIPFFEHMLSHIAKHGLIDMDLKLRGDIGIDCHHSVEDTAILLGQMIHTQLGDKKGIFRYGNFTLPMDEVLTTVAVDLGGRFYFKYTGPALDGKFGIYDAELTLEFLQKLALNAKMNLHVVVHYGENRHHIHESIFKALGKALRQAIAIDTSAKDQIPSTKGMLE.

This sequence belongs to the imidazoleglycerol-phosphate dehydratase family.

It is found in the cytoplasm. It carries out the reaction D-erythro-1-(imidazol-4-yl)glycerol 3-phosphate = 3-(imidazol-4-yl)-2-oxopropyl phosphate + H2O. Its pathway is amino-acid biosynthesis; L-histidine biosynthesis; L-histidine from 5-phospho-alpha-D-ribose 1-diphosphate: step 6/9. In Leptospira biflexa serovar Patoc (strain Patoc 1 / Ames), this protein is Imidazoleglycerol-phosphate dehydratase.